The chain runs to 655 residues: D-xylonate dehydratase YjhG (655 aa).

Belongs to the IlvD/Edd family.

It carries out the reaction D-xylonate = 2-dehydro-3-deoxy-D-arabinonate + H2O. Its activity is regulated as follows. Activity is increased in the presence of Mn(+) and Mg(2+). Inhibited by thiol compounds. Functionally, catalyzes the dehydration of D-xylonic acid to form 2-dehydro-3-deoxy-D-pentonate. In Escherichia coli (strain K12), this protein is D-xylonate dehydratase YjhG (yjhG).